Consider the following 203-residue polypeptide: Na(+)-translocating NADH-quinone reductase subunit E (203 aa).

The next 6 membrane-spanning stretches (helical) occupy residues 12-32 (AVFV…FLAL), 36-56 (MEAA…TVPV), 82-102 (FLGL…LEMV), 115-135 (GVFL…LFMV), 145-165 (LVYG…LAGI), and 181-201 (LGIT…FSGI).

It belongs to the NqrDE/RnfAE family. Composed of six subunits; NqrA, NqrB, NqrC, NqrD, NqrE and NqrF.

It is found in the cell inner membrane. It catalyses the reaction a ubiquinone + n Na(+)(in) + NADH + H(+) = a ubiquinol + n Na(+)(out) + NAD(+). Functionally, NQR complex catalyzes the reduction of ubiquinone-1 to ubiquinol by two successive reactions, coupled with the transport of Na(+) ions from the cytoplasm to the periplasm. NqrA to NqrE are probably involved in the second step, the conversion of ubisemiquinone to ubiquinol. The sequence is that of Na(+)-translocating NADH-quinone reductase subunit E from Hahella chejuensis (strain KCTC 2396).